The sequence spans 34 residues: DDIT3 upstream open reading frame protein (34 aa).

In terms of assembly, interacts with DDIT3 (isoform 1).

It is found in the nucleus. The protein localises to the cytoplasm. Its function is as follows. Product of the upstream open reading frame (uORF) of DDIT3/CHOP that is specifically produced in absence of stress, thereby preventing translation of downstream stress effector DDIT3/CHOP. The protein is DDIT3 upstream open reading frame protein of Mus musculus (Mouse).